A 172-amino-acid chain; its full sequence is Zinc finger C2HC domain-containing protein 1B (172 aa).

C2HC/C3H-type zinc fingers lie at residues lysine 14–lysine 43 and aspartate 117–arginine 146. Zn(2+) is bound by residues cysteine 18, cysteine 21, histidine 33, cysteine 37, cysteine 121, cysteine 124, histidine 136, and cysteine 140.

This sequence belongs to the ZC2HC1 family. Requires Zn(2+) as cofactor.

The polypeptide is Zinc finger C2HC domain-containing protein 1B (Zc2hc1b) (Mus musculus (Mouse)).